We begin with the raw amino-acid sequence, 433 residues long: GTPase Obg (433 aa).

The region spanning 1–159 (MAFRDVLDIE…RRVRLELRLI (159 aa)) is the Obg domain. An OBG-type G domain is found at 160–327 (ADVGLVGYPN…LRQALFDLLP (168 aa)). ATP contacts are provided by residues 166–173 (GYPNAGKS), 191–195 (FTTLS), 214–217 (DIPG), 280–283 (NKIE), and 308–310 (SAK). 2 residues coordinate Mg(2+): Ser-173 and Thr-193. An OCT domain is found at 342-430 (PEEVREEPLT…IGSFRFEYYA (89 aa)).

It belongs to the TRAFAC class OBG-HflX-like GTPase superfamily. OBG GTPase family. Monomer. Mg(2+) is required as a cofactor.

The protein localises to the cytoplasm. Functionally, an essential GTPase which binds GTP, GDP and possibly (p)ppGpp with moderate affinity, with high nucleotide exchange rates and a fairly low GTP hydrolysis rate. Plays a role in control of the cell cycle, stress response, ribosome biogenesis and in those bacteria that undergo differentiation, in morphogenesis control. The sequence is that of GTPase Obg from Deinococcus geothermalis (strain DSM 11300 / CIP 105573 / AG-3a).